The primary structure comprises 196 residues: Pyridoxine/pyridoxamine 5'-phosphate oxidase (196 aa).

Residue Lys-49 coordinates substrate. Lys-66 and Gln-88 together coordinate FMN. 3 residues coordinate substrate: Tyr-106, Arg-110, and Ser-114. FMN contacts are provided by residues 123–124 (QS) and Trp-168. 174 to 176 (RLH) contributes to the substrate binding site. Arg-178 contributes to the FMN binding site.

The protein belongs to the pyridoxamine 5'-phosphate oxidase family. Homodimer. FMN serves as cofactor.

The enzyme catalyses pyridoxamine 5'-phosphate + O2 + H2O = pyridoxal 5'-phosphate + H2O2 + NH4(+). The catalysed reaction is pyridoxine 5'-phosphate + O2 = pyridoxal 5'-phosphate + H2O2. The protein operates within cofactor metabolism; pyridoxal 5'-phosphate salvage; pyridoxal 5'-phosphate from pyridoxamine 5'-phosphate: step 1/1. Its pathway is cofactor metabolism; pyridoxal 5'-phosphate salvage; pyridoxal 5'-phosphate from pyridoxine 5'-phosphate: step 1/1. Its function is as follows. Catalyzes the oxidation of either pyridoxine 5'-phosphate (PNP) or pyridoxamine 5'-phosphate (PMP) into pyridoxal 5'-phosphate (PLP). In Bdellovibrio bacteriovorus (strain ATCC 15356 / DSM 50701 / NCIMB 9529 / HD100), this protein is Pyridoxine/pyridoxamine 5'-phosphate oxidase.